The chain runs to 301 residues: Probable 5-dehydro-4-deoxyglucarate dehydratase (301 aa).

It belongs to the DapA family.

The enzyme catalyses 5-dehydro-4-deoxy-D-glucarate + H(+) = 2,5-dioxopentanoate + CO2 + H2O. It participates in carbohydrate acid metabolism; D-glucarate degradation; 2,5-dioxopentanoate from D-glucarate: step 2/2. The protein is Probable 5-dehydro-4-deoxyglucarate dehydratase of Rhizobium meliloti (strain 1021) (Ensifer meliloti).